Here is a 503-residue protein sequence, read N- to C-terminus: MLSQLAMLQGSLLLVVATMSVAQQTRQEADRGCETLVVQHGHCSYTFLLPKSEPCPPGPEVSRDSNTLQRESLANPLHLGKLPTQQVKQLEQALQNNTQWLKKLERAIKTILRSKLEQVQQQMAQNQTAPMLELGTSLLNQTTAQIRKLTDMEAQLLNQTSRMDAQMPETFLSTNKLENQLLLQRQKLQQLQGQNSALEKRLQALETKQQEELASILSKKAKLLNTLSRQSAALTNIERGLRGVRHNSSLLQDQQHSLRQLLVLLRHLVQERANASAPAFIMAGEQVFQDCAEIQRSGASASGVYTIQVSNATKPRKVFCDLQSSGGRWTLIQRRENGTVNFQRNWKDYKQGFGDPAGEHWLGNEVVHQLTRRAAYSLRVELQDWEGHEAYAQYEHFHLGSENQLYRLSVVGYSGSAGRQSSLVLQNTSFSTLDSDNDHCLCKCAQVMSGGWWFDACGLSNLNGVYYHAPDNKYKMDGIRWHYFKGPSYSLRASRMMIRPLDI.

An N-terminal signal peptide occupies residues 1–24; sequence MLSQLAMLQGSLLLVVATMSVAQQ. A coiled-coil region spans residues 84 to 238; that stretch reads TQQVKQLEQA…RQSAALTNIE (155 aa). N-linked (GlcNAc...) asparagine glycans are attached at residues Asn-96, Asn-126, Asn-140, Asn-158, Asn-247, Asn-274, Asn-311, Asn-337, and Asn-427. The Fibrinogen C-terminal domain maps to 282-502; that stretch reads MAGEQVFQDC…ASRMMIRPLD (221 aa). A disulfide bridge connects residues Cys-291 and Cys-320. Cys-444 and Cys-457 are disulfide-bonded.

Homodimer; disulfide-linked. Interacts with TEK/TIE2. As to expression, highly expressed in the lung with much lower levels found in other tissues.

The protein resides in the secreted. In terms of biological role, binds to TEK/TIE2, modulating ANGPT1 signaling. Can induce tyrosine phosphorylation of TEK/TIE2. Promotes endothelial cell survival, migration and angiogenesis. The protein is Angiopoietin-4 (ANGPT4) of Homo sapiens (Human).